A 462-amino-acid chain; its full sequence is Glycine--tRNA ligase (462 aa).

Arg-98 and Glu-174 together coordinate substrate. Residues 206 to 208 (RNE), 216 to 221 (FRTREF), 290 to 291 (EL), and 334 to 337 (GADR) each bind ATP. Substrate is bound at residue 221–225 (FEQME). 330-334 (EPSLG) contributes to the substrate binding site.

The protein belongs to the class-II aminoacyl-tRNA synthetase family. In terms of assembly, homodimer.

The protein localises to the cytoplasm. It carries out the reaction tRNA(Gly) + glycine + ATP = glycyl-tRNA(Gly) + AMP + diphosphate. Functionally, catalyzes the attachment of glycine to tRNA(Gly). In Lachnoclostridium phytofermentans (strain ATCC 700394 / DSM 18823 / ISDg) (Clostridium phytofermentans), this protein is Glycine--tRNA ligase.